Here is a 222-residue protein sequence, read N- to C-terminus: 7-cyano-7-deazaguanine synthase (222 aa).

Residue 11–21 (LSGGMDSAVLL) participates in ATP binding. Zn(2+) contacts are provided by Cys-192, Cys-200, Cys-203, and Cys-206.

Belongs to the QueC family. Requires Zn(2+) as cofactor.

The enzyme catalyses 7-carboxy-7-deazaguanine + NH4(+) + ATP = 7-cyano-7-deazaguanine + ADP + phosphate + H2O + H(+). It participates in purine metabolism; 7-cyano-7-deazaguanine biosynthesis. Catalyzes the ATP-dependent conversion of 7-carboxy-7-deazaguanine (CDG) to 7-cyano-7-deazaguanine (preQ(0)). The polypeptide is 7-cyano-7-deazaguanine synthase (Sulfurihydrogenibium sp. (strain YO3AOP1)).